A 147-amino-acid polypeptide reads, in one-letter code: Deoxyuridine 5'-triphosphate nucleotidohydrolase (147 aa).

Residues 67 to 69 (RSG), N80, and 84 to 86 (TID) contribute to the substrate site.

This sequence belongs to the dUTPase family. Mg(2+) serves as cofactor.

The enzyme catalyses dUTP + H2O = dUMP + diphosphate + H(+). It functions in the pathway pyrimidine metabolism; dUMP biosynthesis; dUMP from dCTP (dUTP route): step 2/2. This enzyme is involved in nucleotide metabolism: it produces dUMP, the immediate precursor of thymidine nucleotides and it decreases the intracellular concentration of dUTP so that uracil cannot be incorporated into DNA. The polypeptide is Deoxyuridine 5'-triphosphate nucleotidohydrolase (Anaeromyxobacter dehalogenans (strain 2CP-C)).